Consider the following 177-residue polypeptide: Secretion monitor (177 aa).

An N-terminal signal peptide occupies residues 1-37; that stretch reads MIGILNRWRQFGRRYFWPHLLLGMVAASLGVPSNLSG.

It belongs to the SecM family.

It is found in the cytoplasm. Its subcellular location is the cytosol. The protein localises to the periplasm. Functionally, regulates secA expression by translational coupling of the secM secA operon. Translational pausing at a specific Pro residue 5 residues before the end of the protein may allow disruption of a mRNA repressor helix that normally suppresses secA translation initiation. This Yersinia pseudotuberculosis serotype O:1b (strain IP 31758) protein is Secretion monitor.